Here is a 138-residue protein sequence, read N- to C-terminus: ATP synthase epsilon chain (138 aa).

Belongs to the ATPase epsilon chain family. F-type ATPases have 2 components, CF(1) - the catalytic core - and CF(0) - the membrane proton channel. CF(1) has five subunits: alpha(3), beta(3), gamma(1), delta(1), epsilon(1). CF(0) has three main subunits: a, b and c.

It localises to the cell membrane. Its function is as follows. Produces ATP from ADP in the presence of a proton gradient across the membrane. The sequence is that of ATP synthase epsilon chain from Streptococcus pyogenes serotype M3 (strain ATCC BAA-595 / MGAS315).